We begin with the raw amino-acid sequence, 243 residues long: Probable transcriptional regulatory protein Smal_3128 (243 aa).

The protein belongs to the TACO1 family.

It localises to the cytoplasm. In Stenotrophomonas maltophilia (strain R551-3), this protein is Probable transcriptional regulatory protein Smal_3128.